We begin with the raw amino-acid sequence, 370 residues long: Protein-tyrosine sulfotransferase 1 (370 aa).

Residues methionine 1–asparagine 8 lie on the Cytoplasmic side of the membrane. The chain crosses the membrane as a helical; Signal-anchor for type II membrane protein span at residues leucine 9–glycine 25. Residues glutamine 26–glutamate 370 lie on the Lumenal side of the membrane. Asparagine 60 carries N-linked (GlcNAc...) asparagine glycosylation. Arginine 79 to threonine 83 serves as a coordination point for 3'-phosphoadenylyl sulfate. A disulfide bridge connects residues cysteine 97 and cysteine 157. The active-site Proton donor/acceptor is the glutamate 100. Positions arginine 102 to arginine 106 are interaction with peptide substrate. 3'-phosphoadenylyl sulfate-binding residues include arginine 184, serine 192, and arginine 196. A disulfide bridge connects residues cysteine 226 and cysteine 234. Tyrosine 239 is a binding site for 3'-phosphoadenylyl sulfate. An N-linked (GlcNAc...) asparagine glycan is attached at asparagine 262. 3'-phosphoadenylyl sulfate is bound by residues serine 286–asparagine 295 and lysine 301.

It belongs to the protein sulfotransferase family. As to quaternary structure, homodimer. Can also form heterodimers with TPST2. N-glycosylated. Ubiquitous. Detected in heart, brain, lung, liver, spleen, kidney, skeletal muscle and testis.

It is found in the golgi apparatus membrane. The enzyme catalyses L-tyrosyl-[protein] + 3'-phosphoadenylyl sulfate = O-sulfo-L-tyrosine-[protein] + adenosine 3',5'-bisphosphate + H(+). Functionally, catalyzes the O-sulfation of tyrosine residues within acidic motifs of polypeptides, using 3'-phosphoadenylyl sulfate (PAPS) as cosubstrate. The polypeptide is Protein-tyrosine sulfotransferase 1 (Tpst1) (Mus musculus (Mouse)).